The chain runs to 270 residues: 4-hydroxy-tetrahydrodipicolinate reductase (270 aa).

Residues 11–16 (GCQGRM) and Glu-37 each bind NAD(+). Position 38 (Arg-38) interacts with NADP(+). NAD(+) is bound by residues 101-103 (GTT) and 125-128 (ASNF). The active-site Proton donor/acceptor is the His-158. His-159 is a (S)-2,3,4,5-tetrahydrodipicolinate binding site. Lys-162 serves as the catalytic Proton donor. 168–169 (GT) is a (S)-2,3,4,5-tetrahydrodipicolinate binding site.

The protein belongs to the DapB family.

The protein localises to the cytoplasm. The catalysed reaction is (S)-2,3,4,5-tetrahydrodipicolinate + NAD(+) + H2O = (2S,4S)-4-hydroxy-2,3,4,5-tetrahydrodipicolinate + NADH + H(+). It carries out the reaction (S)-2,3,4,5-tetrahydrodipicolinate + NADP(+) + H2O = (2S,4S)-4-hydroxy-2,3,4,5-tetrahydrodipicolinate + NADPH + H(+). It participates in amino-acid biosynthesis; L-lysine biosynthesis via DAP pathway; (S)-tetrahydrodipicolinate from L-aspartate: step 4/4. Its function is as follows. Catalyzes the conversion of 4-hydroxy-tetrahydrodipicolinate (HTPA) to tetrahydrodipicolinate. The sequence is that of 4-hydroxy-tetrahydrodipicolinate reductase from Tolumonas auensis (strain DSM 9187 / NBRC 110442 / TA 4).